The chain runs to 145 residues: Arginine repressor (145 aa).

Belongs to the ArgR family.

It is found in the cytoplasm. The protein operates within amino-acid biosynthesis; L-arginine biosynthesis [regulation]. In terms of biological role, regulates arginine biosynthesis genes. The polypeptide is Arginine repressor (Streptococcus pyogenes serotype M3 (strain ATCC BAA-595 / MGAS315)).